A 241-amino-acid polypeptide reads, in one-letter code: Ribonuclease PH (241 aa).

Phosphate-binding positions include Arg-87 and 125-127; that span reads GTR.

Belongs to the RNase PH family. As to quaternary structure, homohexameric ring arranged as a trimer of dimers.

The catalysed reaction is tRNA(n+1) + phosphate = tRNA(n) + a ribonucleoside 5'-diphosphate. Its function is as follows. Phosphorolytic 3'-5' exoribonuclease that plays an important role in tRNA 3'-end maturation. Removes nucleotide residues following the 3'-CCA terminus of tRNAs; can also add nucleotides to the ends of RNA molecules by using nucleoside diphosphates as substrates, but this may not be physiologically important. Probably plays a role in initiation of 16S rRNA degradation (leading to ribosome degradation) during starvation. The polypeptide is Ribonuclease PH (Salinispora arenicola (strain CNS-205)).